A 216-amino-acid polypeptide reads, in one-letter code: Octanoyltransferase (216 aa).

Positions 30–216 (GEAGEAVWLL…KRQFFEVFGA (187 aa)) constitute a BPL/LPL catalytic domain. Residues 69–76 (RGGQYTYH), 149–151 (AIG), and 162–164 (GLS) contribute to the substrate site. Cys-180 functions as the Acyl-thioester intermediate in the catalytic mechanism.

Belongs to the LipB family.

The protein localises to the cytoplasm. It catalyses the reaction octanoyl-[ACP] + L-lysyl-[protein] = N(6)-octanoyl-L-lysyl-[protein] + holo-[ACP] + H(+). It participates in protein modification; protein lipoylation via endogenous pathway; protein N(6)-(lipoyl)lysine from octanoyl-[acyl-carrier-protein]: step 1/2. Catalyzes the transfer of endogenously produced octanoic acid from octanoyl-acyl-carrier-protein onto the lipoyl domains of lipoate-dependent enzymes. Lipoyl-ACP can also act as a substrate although octanoyl-ACP is likely to be the physiological substrate. This is Octanoyltransferase from Jannaschia sp. (strain CCS1).